A 182-amino-acid chain; its full sequence is Peptidyl-tRNA hydrolase (182 aa).

Residue Tyr14 participates in tRNA binding. His19 functions as the Proton acceptor in the catalytic mechanism. Positions 64, 66, and 112 each coordinate tRNA.

Belongs to the PTH family. In terms of assembly, monomer.

It is found in the cytoplasm. The catalysed reaction is an N-acyl-L-alpha-aminoacyl-tRNA + H2O = an N-acyl-L-amino acid + a tRNA + H(+). Hydrolyzes ribosome-free peptidyl-tRNAs (with 1 or more amino acids incorporated), which drop off the ribosome during protein synthesis, or as a result of ribosome stalling. Functionally, catalyzes the release of premature peptidyl moieties from peptidyl-tRNA molecules trapped in stalled 50S ribosomal subunits, and thus maintains levels of free tRNAs and 50S ribosomes. This Wolbachia sp. subsp. Drosophila simulans (strain wRi) protein is Peptidyl-tRNA hydrolase.